A 282-amino-acid chain; its full sequence is NADPH-dependent 7-cyano-7-deazaguanine reductase (282 aa).

Substrate is bound at residue 90 to 92 (IES). 92–93 (SK) contacts NADPH. Cys190 functions as the Thioimide intermediate in the catalytic mechanism. Asp197 serves as the catalytic Proton donor. 229-230 (HE) contacts substrate. 258-259 (RG) serves as a coordination point for NADPH.

Belongs to the GTP cyclohydrolase I family. QueF type 2 subfamily. As to quaternary structure, homodimer.

It localises to the cytoplasm. The enzyme catalyses 7-aminomethyl-7-carbaguanine + 2 NADP(+) = 7-cyano-7-deazaguanine + 2 NADPH + 3 H(+). Its pathway is tRNA modification; tRNA-queuosine biosynthesis. Catalyzes the NADPH-dependent reduction of 7-cyano-7-deazaguanine (preQ0) to 7-aminomethyl-7-deazaguanine (preQ1). This chain is NADPH-dependent 7-cyano-7-deazaguanine reductase, found in Aeromonas salmonicida (strain A449).